The following is a 350-amino-acid chain: Glycerol-3-phosphate dehydrogenase [NAD(+)], cytoplasmic (350 aa).

NAD(+)-binding positions include 11 to 16 (GSGNWG), F98, K121, and A155. K121 is a binding site for substrate. K206 serves as the catalytic Proton acceptor. Residues R270 and Q299 each coordinate NAD(+). 270–271 (RN) contacts substrate.

This sequence belongs to the NAD-dependent glycerol-3-phosphate dehydrogenase family. In terms of assembly, homodimer.

The protein resides in the cytoplasm. The catalysed reaction is sn-glycerol 3-phosphate + NAD(+) = dihydroxyacetone phosphate + NADH + H(+). It functions in the pathway phospholipid metabolism; alpha-glycerophosphate cycle. In Drosophila ezoana (Fruit fly), this protein is Glycerol-3-phosphate dehydrogenase [NAD(+)], cytoplasmic (Gpdh1).